The sequence spans 420 residues: Serine--tRNA ligase (420 aa).

227–229 lines the L-serine pocket; the sequence is TSE. Residues 258-260 and V274 contribute to the ATP site; that span reads RRE. Residue E281 coordinates L-serine. 345 to 348 is an ATP binding site; the sequence is EVTS. T379 is an L-serine binding site.

It belongs to the class-II aminoacyl-tRNA synthetase family. Type-1 seryl-tRNA synthetase subfamily. In terms of assembly, homodimer. The tRNA molecule binds across the dimer.

The protein resides in the cytoplasm. It catalyses the reaction tRNA(Ser) + L-serine + ATP = L-seryl-tRNA(Ser) + AMP + diphosphate + H(+). The enzyme catalyses tRNA(Sec) + L-serine + ATP = L-seryl-tRNA(Sec) + AMP + diphosphate + H(+). It functions in the pathway aminoacyl-tRNA biosynthesis; selenocysteinyl-tRNA(Sec) biosynthesis; L-seryl-tRNA(Sec) from L-serine and tRNA(Sec): step 1/1. Its function is as follows. Catalyzes the attachment of serine to tRNA(Ser). Is also able to aminoacylate tRNA(Sec) with serine, to form the misacylated tRNA L-seryl-tRNA(Sec), which will be further converted into selenocysteinyl-tRNA(Sec). The protein is Serine--tRNA ligase of Acidothermus cellulolyticus (strain ATCC 43068 / DSM 8971 / 11B).